Consider the following 365-residue polypeptide: UPF0283 membrane protein Avi_2471 (365 aa).

Residues 1–10 are compositionally biased toward basic and acidic residues; that stretch reads MSKAPEDQRP. The tract at residues 1–47 is disordered; the sequence is MSKAPEDQRPMPRRPAAFSLEEPSSSPARPPFAEAQEPQRRAPKSFD. Transmembrane regions (helical) follow at residues 83–103 and 117–137; these read FGKL…GLWI and LGYT…VVVI.

It belongs to the UPF0283 family.

Its subcellular location is the cell inner membrane. This is UPF0283 membrane protein Avi_2471 from Allorhizobium ampelinum (strain ATCC BAA-846 / DSM 112012 / S4) (Agrobacterium vitis (strain S4)).